Here is an 86-residue protein sequence, read N- to C-terminus: U15-lycotoxin-Ls1d (86 aa).

The signal sequence occupies residues 1–20; that stretch reads MNSKIFAVLLLLGLLSCVLS. In terms of domain architecture, WAP spans 21 to 66; sequence DQYCPKSSITACKKMNIRNDCCKDDDCTGGSWCCATPCGNFCKYPT. 5 cysteine pairs are disulfide-bonded: C24-C54, C32-C58, C41-C53, C42-C80, and C47-C62.

It belongs to the venom protein 11 family. 01 (wap-1) subfamily. Post-translationally, contains 5 disulfide bonds. Expressed by the venom gland.

The protein localises to the secreted. Has antibacterial activity. This is U15-lycotoxin-Ls1d from Lycosa singoriensis (Wolf spider).